The sequence spans 173 residues: Adenine phosphoribosyltransferase (173 aa).

This sequence belongs to the purine/pyrimidine phosphoribosyltransferase family. As to quaternary structure, homodimer.

The protein resides in the cytoplasm. The enzyme catalyses AMP + diphosphate = 5-phospho-alpha-D-ribose 1-diphosphate + adenine. It participates in purine metabolism; AMP biosynthesis via salvage pathway; AMP from adenine: step 1/1. Functionally, catalyzes a salvage reaction resulting in the formation of AMP, that is energically less costly than de novo synthesis. In Solibacter usitatus (strain Ellin6076), this protein is Adenine phosphoribosyltransferase.